Reading from the N-terminus, the 1718-residue chain is PR domain zinc finger protein 2 (1718 aa).

Residues 28–141 (EEVRLFPSAV…PGEELLVWYN (114 aa)) enclose the SET domain. The disordered stretch occupies residues 155–335 (ERASARSKRS…TSEETLEDCS (181 aa)). A compositionally biased stretch (basic residues) spans 159 to 173 (ARSKRSSPKSRKGKK). Positions 189–202 (QLKTSEPDFTSANM) are enriched in polar residues. The segment covering 204–216 (DSAEGPKEDEEKP) has biased composition (basic and acidic residues). Residues 265 to 297 (DLGEEEEEEEEEDEEEEEDDDDDELEDEGEEEA) are compositionally biased toward acidic residues. Positions 294–316 (EEEASMPNENSVKEPEIRCDEKP) are retinoblastoma protein binding. Over residues 304–327 (SVKEPEIRCDEKPEDLLEEPKTTS) the composition is skewed to basic and acidic residues. Lysine 347 is covalently cross-linked (Glycyl lysine isopeptide (Lys-Gly) (interchain with G-Cter in SUMO2)). C2H2-type zinc fingers lie at residues 360-382 (FPCQHCERKFTTKQGLERHMHIH) and 390-412 (FKCKYCGKAFGTQINRRRHERRH). Residues 405–457 (RRRHERRHEAGLKRKPSQTLQPSEDLADGKASGENVASKDDSSPPSLGPDCLI) are disordered. Serine 421 bears the Phosphoserine mark. The segment at 483–506 (HPCKYCKKVFGTHTNMRRHQRRVH) adopts a C2H2-type 3 zinc-finger fold. Disordered regions lie at residues 513-550 (KGVRRKGGLEEPQPPAEQAQATQNVYVPSTEPEEEGEA) and 622-660 (EDLPKEPLGSTNSEAKKRRTASPPALPKIKAETDSDPMV). Serine 643 bears the Phosphoserine mark. Glycyl lysine isopeptide (Lys-Gly) (interchain with G-Cter in SUMO2) cross-links involve residues lysine 651, lysine 690, and lysine 692. The segment at 729-797 (TSSRFKRRTS…GRDERETVSP (69 aa)) is disordered. The span at 738–748 (SSPPSSPQHSP) shows a compositional bias: low complexity. Serine 743 carries the phosphoserine modification. Lysine 774 is covalently cross-linked (Glycyl lysine isopeptide (Lys-Gly) (interchain with G-Cter in SUMO2)). Residues serine 781, serine 785, and serine 796 each carry the phosphoserine modification. Glycyl lysine isopeptide (Lys-Gly) (interchain with G-Cter in SUMO2) cross-links involve residues lysine 866 and lysine 879. Residues 903-1083 (VENPADGTRS…SPPPLSAISS (181 aa)) form a disordered region. A compositionally biased stretch (low complexity) spans 951-969 (LQTPSLSSGQLPPLLIPTD). Short sequence motifs (SH3-binding) lie at residues 970–979 (PSSPPPCPPV) and 985–998 (PPPPLLPTVPLPAP). Pro residues predominate over residues 970 to 997 (PSSPPPCPPVLTVATPPPPLLPTVPLPA). Residues 1018–1027 (SPLPILSPTV) show a composition bias toward low complexity. Residues 1028–1038 (SPSPSPIPPVE) are compositionally biased toward pro residues. The SH3-binding motif lies at 1028 to 1052 (SPSPSPIPPVEPLMSAASPGPPTLS). Over residues 1042–1072 (SAASPGPPTLSSSSSSSSSSSSFSSSSSSSS) the composition is skewed to low complexity. 3 C2H2-type zinc fingers span residues 1134–1156 (FVCNVCESPFLSIKDLTKHLSIH), 1162–1185 (FKCEFCVQLFKDKTDLSEHRFLLH), and 1191–1214 (FVCSVCKKEFAFLCNLQQHQRDLH). Residues lysine 1147 and lysine 1151 each participate in a glycyl lysine isopeptide (Lys-Gly) (interchain with G-Cter in SUMO2) cross-link. The disordered stretch occupies residues 1244–1265 (HMQSLPEDPLETSKEEEELNDS). Residues 1251–1265 (DPLETSKEEEELNDS) are compositionally biased toward acidic residues. Residues lysine 1257 and lysine 1281 each participate in a glycyl lysine isopeptide (Lys-Gly) (interchain with G-Cter in SUMO2) cross-link. Residues 1333–1355 (IRCTKCGKGVDNMPELHKHILAC) form a C2H2-type 7; atypical zinc finger. The C2H2-type 8; atypical zinc-finger motif lies at 1455-1478 (HICPYCNREFTYIGSLNKHAAFSC). 3 disordered regions span residues 1478-1576 (CPKK…LRNS), 1589-1612 (GKKPKAVAKNHSAQLSSKTSRSLH), and 1625-1652 (KSTLASKKRTDRFNIKSRERSGGPVTRS). Residues 1486–1498 (PKKKVSHSSKKGG) show a composition bias toward basic residues. The span at 1499–1511 (HSSPASSDKNSNS) shows a compositional bias: low complexity. Composition is skewed to polar residues over residues 1525 to 1556 (QSMQTPLGKTRARSSGPTQVPLPSSSFRSKQN) and 1599 to 1608 (HSAQLSSKTS). Basic and acidic residues predominate over residues 1635–1645 (DRFNIKSRERS).

It belongs to the class V-like SAM-binding methyltransferase superfamily. As to quaternary structure, binds to the retinoblastoma protein (RB). Interacts with GATA3. As to expression, highly expressed in retinoblastoma cell lines and in brain tumors. Also expressed in a number of other cell lines and in brain, heart, skeletal muscle, liver and spleen. Isoform 1 is expressed in testis at much higher level than isoform 3.

It localises to the nucleus. It carries out the reaction L-lysyl(9)-[histone H3] + 3 S-adenosyl-L-methionine = N(6),N(6),N(6)-trimethyl-L-lysyl(9)-[histone H3] + 3 S-adenosyl-L-homocysteine + 3 H(+). Its function is as follows. S-adenosyl-L-methionine-dependent histone methyltransferase that specifically methylates 'Lys-9' of histone H3. May function as a DNA-binding transcription factor. Binds to the macrophage-specific TPA-responsive element (MTE) of the HMOX1 (heme oxygenase 1) gene and may act as a transcriptional activator of this gene. The sequence is that of PR domain zinc finger protein 2 (PRDM2) from Homo sapiens (Human).